The primary structure comprises 489 residues: Glycogen synthase (489 aa).

Lysine 15 is a binding site for ADP-alpha-D-glucose.

It belongs to the glycosyltransferase 1 family. Bacterial/plant glycogen synthase subfamily.

It carries out the reaction [(1-&gt;4)-alpha-D-glucosyl](n) + ADP-alpha-D-glucose = [(1-&gt;4)-alpha-D-glucosyl](n+1) + ADP + H(+). Its pathway is glycan biosynthesis; glycogen biosynthesis. Its function is as follows. Synthesizes alpha-1,4-glucan chains using ADP-glucose. The polypeptide is Glycogen synthase (Francisella tularensis subsp. tularensis (strain SCHU S4 / Schu 4)).